A 228-amino-acid chain; its full sequence is Endolytic peptidoglycan transglycosylase RlpA (228 aa).

An N-terminal signal peptide occupies residues 1–23; sequence MIQRHKLIVLIFLLIFCLSGCNT.

This sequence belongs to the RlpA family.

Functionally, lytic transglycosylase with a strong preference for naked glycan strands that lack stem peptides. The protein is Endolytic peptidoglycan transglycosylase RlpA of Rickettsia felis (strain ATCC VR-1525 / URRWXCal2) (Rickettsia azadi).